A 257-amino-acid chain; its full sequence is Imidazole glycerol phosphate synthase subunit HisF (257 aa).

Residues Asp12 and Asp131 contribute to the active site.

Belongs to the HisA/HisF family. Heterodimer of HisH and HisF.

It localises to the cytoplasm. It carries out the reaction 5-[(5-phospho-1-deoxy-D-ribulos-1-ylimino)methylamino]-1-(5-phospho-beta-D-ribosyl)imidazole-4-carboxamide + L-glutamine = D-erythro-1-(imidazol-4-yl)glycerol 3-phosphate + 5-amino-1-(5-phospho-beta-D-ribosyl)imidazole-4-carboxamide + L-glutamate + H(+). It functions in the pathway amino-acid biosynthesis; L-histidine biosynthesis; L-histidine from 5-phospho-alpha-D-ribose 1-diphosphate: step 5/9. Functionally, IGPS catalyzes the conversion of PRFAR and glutamine to IGP, AICAR and glutamate. The HisF subunit catalyzes the cyclization activity that produces IGP and AICAR from PRFAR using the ammonia provided by the HisH subunit. The protein is Imidazole glycerol phosphate synthase subunit HisF of Paraburkholderia phymatum (strain DSM 17167 / CIP 108236 / LMG 21445 / STM815) (Burkholderia phymatum).